Consider the following 3907-residue polypeptide: A-kinase anchor protein 9 (3907 aa).

Residues 1 to 14 (MEDEERQKKLEAGK) are compositionally biased toward basic and acidic residues. The tract at residues 1–57 (MEDEERQKKLEAGKAKLAQFRQRKAQSDGQSPSKKQKKKRKTSSSKHDVSAHHDLNI) is disordered. The segment covering 34-44 (KKQKKKRKTSS) has biased composition (basic residues). Over residues 45 to 56 (SKHDVSAHHDLN) the composition is skewed to basic and acidic residues. Coiled-coil stretches lie at residues 152–902 (DSPT…ELHL), 932–1010 (EVVE…ENVQ), 1088–1173 (QPSE…QTMK), 1241–1268 (ELQD…EEYN), 1324–1380 (KLSS…ESTV), 1422–1447 (VKEE…VAKV), and 1573–1647 (SMDA…DNEN). The residue at position 153 (serine 153) is a Phosphoserine. At serine 1327 the chain carries Phosphoserine. Over residues 1682 to 1692 (STQTQNGNENQ) the composition is skewed to low complexity. The interval 1682-1713 (STQTQNGNENQGEVEEQTFKEKELDRKPEDVP) is disordered. Basic and acidic residues predominate over residues 1698–1711 (QTFKEKELDRKPED). Serine 1765 carries the phosphoserine modification. Coiled-coil stretches lie at residues 1845–2443 (NISS…VEKI), 2532–2549 (ETEM…IVEE), 2591–2764 (QLRE…SKKA), 3061–3088 (LNCL…ADRR), 3120–3466 (ELLE…NLNE), and 3583–3685 (SLTE…NDSL). The tract at residues 2542 to 2555 (NLQKIVEEKVAAAL) is PKA-RII subunit binding domain. The tract at residues 3377–3405 (RQQMEKDRQVHRKTLQTEQEANTEGQKKM) is disordered. Phosphoserine is present on residues serine 3690, serine 3842, serine 3865, and serine 3897.

In terms of assembly, interacts with the regulatory region of protein kinase N (PKN), protein phosphatase 2A (PP2A), protein phosphatase 1 (PP1) and the immature non-phosphorylated form of PKC epsilon. Interacts with CIP4 and FNBP1. Interacts with chloride intracellular channel proteins CLIC1, CLIC4 and CLIC5. CSNK1D binding promotes its centrosomal subcellular location. Interacts with GM130/GOLGA2; leading to recruitment to the Golgi apparatus. Interacts with KCNQ1; targets protein kinase A (PKA) catalytic and regulatory subunits and protein phosphatase 1 (PP1), to the heterodimer KCNQ1-KCNE1. Interacts with PDE4DIP isoform 13/MMG8/SMYLE; this interaction stabilizes both proteins. In complex with PDE4DIP isoform 13, recruits CAMSAP2 to the Golgi apparatus. Forms a pericentrosomal complex with CDK5RAP2, EB1/MAPRE1 and PDE4DIP isoform 13; within this complex, MAPRE1 binding to CDK5RAP2 may be mediated by PDE4DIP. Interacts with MAPRE1 and MAPRE3. Interacts (via C-terminus) with CAMSAP2; this interaction is much stronger in the presence of PDE4DIP isoform 13/MMG8/SMYLE. Interacts with CAMSAP3. Interacts (via C-terminus) with the gamma-tubulin ring complex (gamma-TuRC), composed of gamma-tubulin, TUBGCP2, TUBGCP3, TUBGCP4, TUBGCP5 and TUBGCP6. In terms of tissue distribution, widely expressed. Isoform 4: Highly expressed in skeletal muscle and in pancreas.

The protein localises to the golgi apparatus. It is found in the cytoplasm. Its subcellular location is the cytoskeleton. The protein resides in the microtubule organizing center. It localises to the centrosome. Its function is as follows. Scaffolding protein that assembles several protein kinases and phosphatases on the centrosome and Golgi apparatus. Required to maintain the integrity of the Golgi apparatus. Required for microtubule nucleation at the cis-side of the Golgi apparatus. Required for association of the centrosomes with the poles of the bipolar mitotic spindle during metaphase. In complex with PDE4DIP isoform 13/MMG8/SMYLE, recruits CAMSAP2 to the Golgi apparatus and tethers non-centrosomal minus-end microtubules to the Golgi, an important step for polarized cell movement. In complex with PDE4DIP isoform 13/MMG8/SMYLE, EB1/MAPRE1 and CDK5RAP2, contributes to microtubules nucleation and extension also from the centrosome to the cell periphery. In terms of biological role, associated with the N-methyl-D-aspartate receptor and is specifically found in the neuromuscular junction (NMJ) as well as in neuronal synapses, suggesting a role in the organization of postsynaptic specializations. The protein is A-kinase anchor protein 9 (AKAP9) of Homo sapiens (Human).